Consider the following 336-residue polypeptide: Glyceraldehyde-3-phosphate dehydrogenase (336 aa).

Residues 12–13, D34, R78, and T121 contribute to the NAD(+) site; that span reads RI. D-glyceraldehyde 3-phosphate-binding positions include 151–153, T182, R199, 212–213, and R235; these read SCT and TG. Catalysis depends on C152, which acts as the Nucleophile. An NAD(+)-binding site is contributed by N316.

The protein belongs to the glyceraldehyde-3-phosphate dehydrogenase family. In terms of assembly, homotetramer.

The protein localises to the cytoplasm. It catalyses the reaction D-glyceraldehyde 3-phosphate + phosphate + NAD(+) = (2R)-3-phospho-glyceroyl phosphate + NADH + H(+). Its pathway is carbohydrate degradation; glycolysis; pyruvate from D-glyceraldehyde 3-phosphate: step 1/5. In terms of biological role, catalyzes the oxidative phosphorylation of glyceraldehyde 3-phosphate (G3P) to 1,3-bisphosphoglycerate (BPG) using the cofactor NAD. The first reaction step involves the formation of a hemiacetal intermediate between G3P and a cysteine residue, and this hemiacetal intermediate is then oxidized to a thioester, with concomitant reduction of NAD to NADH. The reduced NADH is then exchanged with the second NAD, and the thioester is attacked by a nucleophilic inorganic phosphate to produce BPG. The protein is Glyceraldehyde-3-phosphate dehydrogenase (gap) of Streptococcus pyogenes serotype M3 (strain ATCC BAA-595 / MGAS315).